Here is a 185-residue protein sequence, read N- to C-terminus: ATP synthase subunit delta (185 aa).

Belongs to the ATPase delta chain family. F-type ATPases have 2 components, F(1) - the catalytic core - and F(0) - the membrane proton channel. F(1) has five subunits: alpha(3), beta(3), gamma(1), delta(1), epsilon(1). CF(0) has four main subunits: a(1), b(1), b'(1) and c(10-14). The alpha and beta chains form an alternating ring which encloses part of the gamma chain. F(1) is attached to F(0) by a central stalk formed by the gamma and epsilon chains, while a peripheral stalk is formed by the delta, b and b' chains.

The protein resides in the cellular thylakoid membrane. Functionally, f(1)F(0) ATP synthase produces ATP from ADP in the presence of a proton or sodium gradient. F-type ATPases consist of two structural domains, F(1) containing the extramembraneous catalytic core and F(0) containing the membrane proton channel, linked together by a central stalk and a peripheral stalk. During catalysis, ATP synthesis in the catalytic domain of F(1) is coupled via a rotary mechanism of the central stalk subunits to proton translocation. Its function is as follows. This protein is part of the stalk that links CF(0) to CF(1). It either transmits conformational changes from CF(0) to CF(1) or is implicated in proton conduction. In Picosynechococcus sp. (strain ATCC 27264 / PCC 7002 / PR-6) (Agmenellum quadruplicatum), this protein is ATP synthase subunit delta.